A 271-amino-acid chain; its full sequence is Zinc finger CCHC domain-containing protein 9 (271 aa).

Positions 1-67 (MTRWARVTTS…RKKNKKKKEY (67 aa)) are disordered. Over residues 7–20 (VTTSNSKRPLSATS) the composition is skewed to polar residues. Residues 22-33 (EDMKKGSVERAD) are compositionally biased toward basic and acidic residues. Residues 35-46 (SLPNRKQCQSSR) are compositionally biased toward polar residues. A compositionally biased stretch (basic residues) spans 56-65 (AKRKKNKKKK). CCHC-type zinc fingers lie at residues 128 to 145 (MVCFHCRQPGHGIADCPA), 155 to 172 (GICYRCGSTEHEMSKCRA), 184 to 201 (AKCFVCGEMGHLSRSCPD), and 211 to 228 (GSCKLCGSVEHFKKDCRE).

As to expression, detected in brain cortex and in testis.

It is found in the nucleus. The protein localises to the nucleolus. In terms of biological role, may down-regulate transcription mediated by NF-kappa-B and the serum response element. This is Zinc finger CCHC domain-containing protein 9 (Zcchc9) from Mus musculus (Mouse).